Here is a 405-residue protein sequence, read N- to C-terminus: Serine-type anaerobic sulfatase-maturating enzyme (405 aa).

Residues 18 to 249 enclose the Radical SAM core domain; sequence PRSPVPFHIL…QWRKRCDRGR (232 aa). [4Fe-4S] cluster contacts are provided by C35 and C39. Residue Y41 coordinates S-adenosyl-L-methionine. C42 is a binding site for [4Fe-4S] cluster. S-adenosyl-L-methionine-binding residues include G84, S140, and R152. [4Fe-4S] cluster-binding residues include C270, C276, and C291. D292 acts as the Proton acceptor in catalysis. [4Fe-4S] cluster is bound by residues C331, C334, C340, C344, and C357.

This sequence belongs to the radical SAM superfamily. Anaerobic sulfatase-maturating enzyme family. Monomer. Interacts with AtsA prior to its export to the periplasm. [4Fe-4S] cluster is required as a cofactor.

It is found in the cytoplasm. It carries out the reaction L-seryl-[sulfatase] + S-adenosyl-L-methionine = 3-oxo-L-alanyl-[sulfatase] + 5'-deoxyadenosine + L-methionine + H(+). Its pathway is protein modification; sulfatase oxidation. Functionally, involved in 'Ser-type' sulfatase maturation under anaerobic conditions. Catalyzes the post-translational modification of serine ('Ser-72' in the arylsulfatase AtsA) into 3-oxoalanine (also known as C(alpha)-formylglycine (FGly)), by a free radical chemical mechanism initiated via the reductive cleavage of S-adenosyl-L-methionine (SAM). This Klebsiella aerogenes (Enterobacter aerogenes) protein is Serine-type anaerobic sulfatase-maturating enzyme.